We begin with the raw amino-acid sequence, 472 residues long: Putative ankyrin repeat protein L675 (472 aa).

ANK repeat units follow at residues 125 to 156 (YKAN…DIHL), 187 to 216 (DNFK…NETI), 265 to 295 (YKTK…DKDI), 297 to 323 (HAML…NIHY), 325 to 351 (NDQA…GMDS), 352 to 381 (NNVF…DVNA), 382 to 411 (NNRS…DIKI), and 413 to 440 (DTVI…SCDD).

This Acanthamoeba polyphaga (Amoeba) protein is Putative ankyrin repeat protein L675.